Consider the following 793-residue polypeptide: Phosphoribosylformylglycinamidine synthase subunit PurL (793 aa).

The active site involves histidine 53. Residues tyrosine 56 and lysine 95 each contribute to the ATP site. Glutamate 97 provides a ligand contact to Mg(2+). Substrate is bound by residues 98–101 and arginine 120; that span reads SHNH. The active-site Proton acceptor is histidine 99. Residue aspartate 121 participates in Mg(2+) binding. Glutamine 244 contacts substrate. Aspartate 272 serves as a coordination point for Mg(2+). 316–318 provides a ligand contact to substrate; sequence ESQ. The ATP site is built by aspartate 523 and glycine 560. Residue asparagine 561 coordinates Mg(2+). Serine 563 contacts substrate.

The protein belongs to the FGAMS family. Monomer. Part of the FGAM synthase complex composed of 1 PurL, 1 PurQ and 2 PurS subunits.

It is found in the cytoplasm. The enzyme catalyses N(2)-formyl-N(1)-(5-phospho-beta-D-ribosyl)glycinamide + L-glutamine + ATP + H2O = 2-formamido-N(1)-(5-O-phospho-beta-D-ribosyl)acetamidine + L-glutamate + ADP + phosphate + H(+). It functions in the pathway purine metabolism; IMP biosynthesis via de novo pathway; 5-amino-1-(5-phospho-D-ribosyl)imidazole from N(2)-formyl-N(1)-(5-phospho-D-ribosyl)glycinamide: step 1/2. In terms of biological role, part of the phosphoribosylformylglycinamidine synthase complex involved in the purines biosynthetic pathway. Catalyzes the ATP-dependent conversion of formylglycinamide ribonucleotide (FGAR) and glutamine to yield formylglycinamidine ribonucleotide (FGAM) and glutamate. The FGAM synthase complex is composed of three subunits. PurQ produces an ammonia molecule by converting glutamine to glutamate. PurL transfers the ammonia molecule to FGAR to form FGAM in an ATP-dependent manner. PurS interacts with PurQ and PurL and is thought to assist in the transfer of the ammonia molecule from PurQ to PurL. This chain is Phosphoribosylformylglycinamidine synthase subunit PurL, found in Prochlorococcus marinus (strain SARG / CCMP1375 / SS120).